The sequence spans 333 residues: Trans-1,2-dihydrobenzene-1,2-diol dehydrogenase (333 aa).

This sequence belongs to the Gfo/Idh/MocA family. Homodimer.

The enzyme catalyses (1R,2R)-1,2-dihydrobenzene-1,2-diol + NADP(+) = catechol + NADPH + H(+). It carries out the reaction D-xylose + NADP(+) = D-xylono-1,5-lactone + NADPH + H(+). The protein is Trans-1,2-dihydrobenzene-1,2-diol dehydrogenase (Dhdh) of Mus musculus (Mouse).